A 475-amino-acid polypeptide reads, in one-letter code: Vasculin-like protein 1 (475 aa).

Phosphoserine is present on residues S49 and S76. Disordered stretches follow at residues N92 to G115 and P160 to Q191. S202 carries the post-translational modification Phosphoserine. Disordered stretches follow at residues L237 to L271 and P292 to T318. Residues E294–T311 show a composition bias toward low complexity. A Phosphothreonine modification is found at T300. At S383 the chain carries Phosphoserine. Positions C456–K475 are disordered.

It belongs to the vasculin family.

It is found in the nucleus. Possible transcription factor. This chain is Vasculin-like protein 1 (Gpbp1l1), found in Rattus norvegicus (Rat).